We begin with the raw amino-acid sequence, 29 residues long: Trypsin inhibitor 3 (29 aa).

3 disulfides stabilise this stretch: cysteine 3–cysteine 20, cysteine 10–cysteine 22, and cysteine 16–cysteine 28.

It belongs to the protease inhibitor I7 (squash-type serine protease inhibitor) family.

It is found in the secreted. In terms of biological role, inhibits trypsin. The chain is Trypsin inhibitor 3 from Luffa aegyptiaca (Sponge gourd).